Reading from the N-terminus, the 501-residue chain is ATP-dependent rRNA helicase RRP3 (501 aa).

Positions 3 to 44 form a coiled coil; it reads KIVKRKEKKANDELTSLAEKIRAKALENQKKLIEAEKEGGSE. Residues 36–79 form a disordered region; that stretch reads EAEKEGGSESDSEEDATAEKKKVLKSKSKSTVSTQNENTNEDES. 3 positions are modified to phosphoserine: Ser43, Ser45, and Ser47. The Q motif motif lies at 81–109; the sequence is ESFSELNLVPELIQACKNLNYSKPTPIQS. The Helicase ATP-binding domain occupies 112-284; it reads IPPALEGHDI…RASLTNPVKC (173 aa). 125-132 contributes to the ATP binding site; it reads AQTGSGKT. A DEAD box motif is present at residues 231–234; the sequence is DEAD. Residues 307–461 enclose the Helicase C-terminal domain; sequence LKNTYLIYLL…NIILTLRDSV (155 aa). The segment at 480-501 is disordered; sequence IARGKGRRGRMMTRENMDMGER. Over residues 491–501 the composition is skewed to basic and acidic residues; it reads MTRENMDMGER.

The protein belongs to the DEAD box helicase family. DDX47/RRP3 subfamily. In terms of assembly, interacts with the SSU processome.

The protein resides in the nucleus. It catalyses the reaction ATP + H2O = ADP + phosphate + H(+). Functionally, ATP-dependent rRNA helicase required for pre-ribosomal RNA processing. Involved in the maturation of the 35S-pre-rRNA and to its cleavage to mature 18S rRNA. The protein is ATP-dependent rRNA helicase RRP3 of Saccharomyces cerevisiae (strain YJM789) (Baker's yeast).